A 90-amino-acid polypeptide reads, in one-letter code: UPF0367 protein SYNPCC7002_A0153 (90 aa).

It belongs to the UPF0367 family.

This is UPF0367 protein SYNPCC7002_A0153 from Picosynechococcus sp. (strain ATCC 27264 / PCC 7002 / PR-6) (Agmenellum quadruplicatum).